Here is a 137-residue protein sequence, read N- to C-terminus: uncharacterized protein (137 aa).

A helical transmembrane segment spans residues 20-42 (TVLAFKGEGALALAGLLVMAAVA).

The protein localises to the host membrane. This is an uncharacterized protein from Dryophytes versicolor (chameleon treefrog).